A 198-amino-acid chain; its full sequence is Putative pseudouridine methyltransferase (198 aa).

Residues L132 and C186 each contribute to the S-adenosyl-L-methionine site.

Belongs to the methyltransferase superfamily. TrmY family.

Its subcellular location is the cytoplasm. This is Putative pseudouridine methyltransferase from Shewanella frigidimarina (strain NCIMB 400).